The primary structure comprises 418 residues: Pestheic acid cluster transcriptional regulator 1 (418 aa).

A disordered region spans residues 244–272 (GTAVTTTATTSSSFISKSSEEPSPKRIKP). Positions 245-260 (TAVTTTATTSSSFISK) are enriched in low complexity.

Its subcellular location is the nucleus. In terms of biological role, transcription factor that, with ptaR2 and ptaR3, coregulates the expression of the gene cluster that mediates the biosynthesis of pestheic acid, a diphenyl ether which is a biosynthetic precursor of the unique chloropupukeananes. The sequence is that of Pestheic acid cluster transcriptional regulator 1 from Pestalotiopsis fici (strain W106-1 / CGMCC3.15140).